Here is a 633-residue protein sequence, read N- to C-terminus: Probable methyltransferase PMT17 (633 aa).

The Cytoplasmic portion of the chain corresponds to M1–K18. A helical; Signal-anchor for type II membrane protein membrane pass occupies residues L19–Q39. The Lumenal segment spans residues A40–N633. Residues L50–A71 are disordered. A compositionally biased stretch (low complexity) spans S59–S70. N-linked (GlcNAc...) asparagine glycosylation is present at N87.

This sequence belongs to the methyltransferase superfamily.

The protein resides in the endoplasmic reticulum membrane. The chain is Probable methyltransferase PMT17 from Arabidopsis thaliana (Mouse-ear cress).